An 802-amino-acid chain; its full sequence is LPS-assembly protein LptD (802 aa).

Residues 1–29 (MARLFSLKPLVLALGFCFGTHCAAADAVA) form the signal peptide.

Belongs to the LptD family. As to quaternary structure, component of the lipopolysaccharide transport and assembly complex. Interacts with LptE and LptA.

The protein resides in the cell outer membrane. Its function is as follows. Together with LptE, is involved in the assembly of lipopolysaccharide (LPS) at the surface of the outer membrane. The sequence is that of LPS-assembly protein LptD from Neisseria meningitidis serogroup A / serotype 4A (strain DSM 15465 / Z2491).